A 171-amino-acid polypeptide reads, in one-letter code: Histone H1, gonadal (171 aa).

Disordered stretches follow at residues 1-40 (AASP…AHPP) and 133-171 (AKAK…KAKP). The span at 9–35 (ASPRKSPKKSPRKSPKKKSPRKRKARS) shows a compositional bias: basic residues. An H15 domain is found at 37-111 (AHPPVIDMIT…GATGRFRVGA (75 aa)).

Belongs to the histone H1/H5 family. In terms of tissue distribution, sperm.

It localises to the nucleus. Its subcellular location is the chromosome. Its function is as follows. Histones H1 are necessary for the condensation of nucleosome chains into higher-order structures. The polypeptide is Histone H1, gonadal (Echinolampas crassa (Sea urchin)).